Reading from the N-terminus, the 249-residue chain is MIDPIHQFNIEKIFTIGHIGGQEIAFTNSSAYMLVAVAVISLLMIGGVAGRQMVPGRIQSLAEISYEFVAGTIRSTAGVEGLKFFPLVFSLFMFIMISNMVGIIPYTFTITSHLIVTAALALLVFLTVLIYGFYRNGLGFFKIFVPSGVPVFILPLVVFIEVFSFFLRPISHSVRLFANMLAGHIALKVFASFIPLLAGLGIAGYFGAVLPLGMVIALTALELLVAFLQAYVFAILTCIYLNDALHAGH.

The next 6 helical transmembrane spans lie at 30–50 (SAYMLVAVAVISLLMIGGVAG), 84–104 (FFPLVFSLFMFIMISNMVGII), 114–134 (LIVTAALALLVFLTVLIYGFY), 143–163 (IFVPSGVPVFILPLVVFIEVF), 196–216 (LLAGLGIAGYFGAVLPLGMVI), and 221–241 (LELLVAFLQAYVFAILTCIYL).

This sequence belongs to the ATPase A chain family. In terms of assembly, F-type ATPases have 2 components, CF(1) - the catalytic core - and CF(0) - the membrane proton channel. CF(1) has five subunits: alpha(3), beta(3), gamma(1), delta(1), epsilon(1). CF(0) has four main subunits: a, b, b' and c.

It localises to the cell inner membrane. In terms of biological role, key component of the proton channel; it plays a direct role in the translocation of protons across the membrane. The sequence is that of ATP synthase subunit a from Rhodopseudomonas palustris (strain BisB18).